The chain runs to 200 residues: ATP-dependent Clp protease proteolytic subunit 3 (200 aa).

Catalysis depends on Ser-101, which acts as the Nucleophile. His-126 is a catalytic residue.

This sequence belongs to the peptidase S14 family. In terms of assembly, fourteen ClpP subunits assemble into 2 heptameric rings which stack back to back to give a disk-like structure with a central cavity, resembling the structure of eukaryotic proteasomes.

It is found in the cytoplasm. It carries out the reaction Hydrolysis of proteins to small peptides in the presence of ATP and magnesium. alpha-casein is the usual test substrate. In the absence of ATP, only oligopeptides shorter than five residues are hydrolyzed (such as succinyl-Leu-Tyr-|-NHMec, and Leu-Tyr-Leu-|-Tyr-Trp, in which cleavage of the -Tyr-|-Leu- and -Tyr-|-Trp bonds also occurs).. In terms of biological role, cleaves peptides in various proteins in a process that requires ATP hydrolysis. Has a chymotrypsin-like activity. Plays a major role in the degradation of misfolded proteins. The chain is ATP-dependent Clp protease proteolytic subunit 3 from Synechococcus sp. (strain CC9902).